Consider the following 215-residue polypeptide: Peroxiredoxin (215 aa).

The 156-residue stretch at 3 to 158 (PLLGDNFPEI…ILRAVKALQV (156 aa)) folds into the Thioredoxin domain. The active-site Cysteine sulfenic acid (-SOH) intermediate is the Cys45. Residue Arg121 coordinates substrate. Cys205 and Cys211 form a disulfide bridge.

It belongs to the peroxiredoxin family. Prx6 subfamily. As to quaternary structure, homodecamer. Pentamer of dimers that assemble into a ring structure.

It is found in the cytoplasm. The enzyme catalyses a hydroperoxide + [thioredoxin]-dithiol = an alcohol + [thioredoxin]-disulfide + H2O. Functionally, thiol-specific peroxidase that catalyzes the reduction of hydrogen peroxide and organic hydroperoxides to water and alcohols, respectively. Plays a role in cell protection against oxidative stress by detoxifying peroxides. The protein is Peroxiredoxin of Archaeoglobus fulgidus (strain ATCC 49558 / DSM 4304 / JCM 9628 / NBRC 100126 / VC-16).